The sequence spans 280 residues: MEIIKTVVELQTALLKIREQNKSIGFVPTMGALHRGHIELVKQSVVENTISIVSIFVNPTQFNDKNDLLKYPRTLNADCKLLLQETNNHFVFAPSVEEIYSETNIQQFKFGHLETVMEGKLRPGHFNGVAQVVSRLFKIVKPNCAYFGEKDFQQLTIIRTLVRLLNLNVKIIPHPTVREPNGLALSSRNIHLTPKQKKNAGMIFKTLSKSRKEKNILSIQELKQKTINKINCIPDFRVEYFDLVDGNTLQSITDWKDTKYIVGCIAVYIGEVRLIDNITY.

Residue 30–37 participates in ATP binding; that stretch reads MGALHRGH. Catalysis depends on His37, which acts as the Proton donor. Position 61 (Gln61) interacts with (R)-pantoate. Gln61 contributes to the beta-alanine binding site. 148 to 151 is a binding site for ATP; sequence GEKD. Gln154 lines the (R)-pantoate pocket. ATP-binding positions include Val177 and 185–188; that span reads LSSR.

This sequence belongs to the pantothenate synthetase family. As to quaternary structure, homodimer.

The protein localises to the cytoplasm. The enzyme catalyses (R)-pantoate + beta-alanine + ATP = (R)-pantothenate + AMP + diphosphate + H(+). It participates in cofactor biosynthesis; (R)-pantothenate biosynthesis; (R)-pantothenate from (R)-pantoate and beta-alanine: step 1/1. In terms of biological role, catalyzes the condensation of pantoate with beta-alanine in an ATP-dependent reaction via a pantoyl-adenylate intermediate. This Azobacteroides pseudotrichonymphae genomovar. CFP2 protein is Pantothenate synthetase.